A 508-amino-acid polypeptide reads, in one-letter code: Glycerol kinase (508 aa).

Position 14 (T14) interacts with ADP. ATP-binding residues include T14, T15, and S16. A sn-glycerol 3-phosphate-binding site is contributed by T14. R18 is a binding site for ADP. R84, E85, and Y136 together coordinate sn-glycerol 3-phosphate. Positions 84, 85, and 136 each coordinate glycerol. Residue H232 is modified to Phosphohistidine; by HPr. Residue D246 participates in sn-glycerol 3-phosphate binding. D246 and Q247 together coordinate glycerol. Residues T268 and G311 each contribute to the ADP site. ATP-binding residues include T268, G311, Q315, and G412. ADP is bound by residues G412 and N416.

The protein belongs to the FGGY kinase family. Homotetramer and homodimer (in equilibrium). The phosphoenolpyruvate-dependent sugar phosphotransferase system (PTS), including enzyme I, and histidine-containing protein (HPr) are required for the phosphorylation, which leads to the activation of the enzyme.

The enzyme catalyses glycerol + ATP = sn-glycerol 3-phosphate + ADP + H(+). It participates in polyol metabolism; glycerol degradation via glycerol kinase pathway; sn-glycerol 3-phosphate from glycerol: step 1/1. With respect to regulation, activated by phosphorylation and inhibited by fructose 1,6-bisphosphate (FBP). Key enzyme in the regulation of glycerol uptake and metabolism. Catalyzes the phosphorylation of glycerol to yield sn-glycerol 3-phosphate. The chain is Glycerol kinase from Streptococcus pyogenes serotype M28 (strain MGAS6180).